A 480-amino-acid chain; its full sequence is Iron-sulfur cluster assembly SufBD family protein slr0074 (480 aa).

It belongs to the iron-sulfur cluster assembly SufBD family.

This Synechocystis sp. (strain ATCC 27184 / PCC 6803 / Kazusa) protein is Iron-sulfur cluster assembly SufBD family protein slr0074.